The chain runs to 55 residues: uncharacterized protein (55 aa).

The next 2 helical transmembrane spans lie at 5–25 and 26–46; these read LISI…MMHM and LPLY…LYRL.

Its subcellular location is the cell membrane. This is an uncharacterized protein from Bacillus subtilis (strain 168).